The sequence spans 733 residues: Catalase-peroxidase (733 aa).

Residues 96-219 (WHSAGTYRTG…LAAVQMGLIY (124 aa)) constitute a cross-link (tryptophyl-tyrosyl-methioninium (Trp-Tyr) (with M-245)). His97 acts as the Proton acceptor in catalysis. The segment at residues 219–245 (YVNPEGPNGNPDPLAAAKDIRETFARM) is a cross-link (tryptophyl-tyrosyl-methioninium (Tyr-Met) (with W-96)). Residue His260 coordinates heme b.

It belongs to the peroxidase family. Peroxidase/catalase subfamily. As to quaternary structure, homodimer or homotetramer. Requires heme b as cofactor. Formation of the three residue Trp-Tyr-Met cross-link is important for the catalase, but not the peroxidase activity of the enzyme.

It carries out the reaction H2O2 + AH2 = A + 2 H2O. It catalyses the reaction 2 H2O2 = O2 + 2 H2O. Bifunctional enzyme with both catalase and broad-spectrum peroxidase activity. In Geobacter sp. (strain M21), this protein is Catalase-peroxidase.